Here is a 480-residue protein sequence, read N- to C-terminus: tRNA-2-methylthio-N(6)-dimethylallyladenosine synthase (480 aa).

The MTTase N-terminal domain maps to 3 to 120 (KKLYIKTWGC…LPEMLNQLQH (118 aa)). Positions 12, 49, 83, 157, 161, and 164 each coordinate [4Fe-4S] cluster. Positions 143 to 375 (KADGASAFVS…QEQITHQALR (233 aa)) constitute a Radical SAM core domain. Residues 378–441 (RQMLNTEQRV…ANSLRGELVR (64 aa)) enclose the TRAM domain.

This sequence belongs to the methylthiotransferase family. MiaB subfamily. As to quaternary structure, monomer. It depends on [4Fe-4S] cluster as a cofactor.

It localises to the cytoplasm. It carries out the reaction N(6)-dimethylallyladenosine(37) in tRNA + (sulfur carrier)-SH + AH2 + 2 S-adenosyl-L-methionine = 2-methylsulfanyl-N(6)-dimethylallyladenosine(37) in tRNA + (sulfur carrier)-H + 5'-deoxyadenosine + L-methionine + A + S-adenosyl-L-homocysteine + 2 H(+). Catalyzes the methylthiolation of N6-(dimethylallyl)adenosine (i(6)A), leading to the formation of 2-methylthio-N6-(dimethylallyl)adenosine (ms(2)i(6)A) at position 37 in tRNAs that read codons beginning with uridine. The chain is tRNA-2-methylthio-N(6)-dimethylallyladenosine synthase from Colwellia psychrerythraea (strain 34H / ATCC BAA-681) (Vibrio psychroerythus).